The primary structure comprises 1070 residues: DNA-directed RNA polymerase subunit beta (1070 aa).

It belongs to the RNA polymerase beta chain family. As to quaternary structure, in plastids the minimal PEP RNA polymerase catalytic core is composed of four subunits: alpha, beta, beta', and beta''. When a (nuclear-encoded) sigma factor is associated with the core the holoenzyme is formed, which can initiate transcription.

It localises to the plastid. It is found in the chloroplast. The enzyme catalyses RNA(n) + a ribonucleoside 5'-triphosphate = RNA(n+1) + diphosphate. Its function is as follows. DNA-dependent RNA polymerase catalyzes the transcription of DNA into RNA using the four ribonucleoside triphosphates as substrates. The polypeptide is DNA-directed RNA polymerase subunit beta (Angiopteris evecta (Mule's foot fern)).